The chain runs to 384 residues: MFQFETTTACPDTKARTGKMTTAHGDVATPVFMPVGTLATVKSLSPEDLVACGAQIILGNTYHLYLRPGCDIIDAFSGVHAFMGWNRPLLTDSGGFQVFSLAKLSRITEEGAAFQSHLDGSSHLLTPESVIDIQNRLGSDIQMCLDQCIAFPAEKGAARDAANLTTRWAGRCRNRWQETGGPSRCGLFGIVQGGMFDDLRADSAGRLVDLDFSGYAVGGLSVGEPIETRLAVAEHTLSLLPPDRPRYIMGVGTPAELVELVALGADMFDCVMPTRNARNGKLFTSFGAINIRNACHAKETGPVDPACTCYTCTRFSRAYLRHLFMSRELLAYRLATLHNLFYYINLINDARAAVAAGRFAAFRKAFYAAQQATGPTGKEPCAGS.

The active-site Proton acceptor is Asp-92. Substrate is bound by residues 92–96, Asp-146, Gln-192, and Gly-219; that span reads DSGGF. The RNA binding stretch occupies residues 250–256; sequence GVGTPAE. Asp-269 acts as the Nucleophile in catalysis. Residues 274–278 form an RNA binding; important for wobble base 34 recognition region; that stretch reads TRNAR. Residues Cys-307, Cys-309, Cys-312, and His-338 each contribute to the Zn(2+) site.

It belongs to the queuine tRNA-ribosyltransferase family. In terms of assembly, homodimer. Within each dimer, one monomer is responsible for RNA recognition and catalysis, while the other monomer binds to the replacement base PreQ1. Requires Zn(2+) as cofactor.

The catalysed reaction is 7-aminomethyl-7-carbaguanine + guanosine(34) in tRNA = 7-aminomethyl-7-carbaguanosine(34) in tRNA + guanine. It participates in tRNA modification; tRNA-queuosine biosynthesis. In terms of biological role, catalyzes the base-exchange of a guanine (G) residue with the queuine precursor 7-aminomethyl-7-deazaguanine (PreQ1) at position 34 (anticodon wobble position) in tRNAs with GU(N) anticodons (tRNA-Asp, -Asn, -His and -Tyr). Catalysis occurs through a double-displacement mechanism. The nucleophile active site attacks the C1' of nucleotide 34 to detach the guanine base from the RNA, forming a covalent enzyme-RNA intermediate. The proton acceptor active site deprotonates the incoming PreQ1, allowing a nucleophilic attack on the C1' of the ribose to form the product. After dissociation, two additional enzymatic reactions on the tRNA convert PreQ1 to queuine (Q), resulting in the hypermodified nucleoside queuosine (7-(((4,5-cis-dihydroxy-2-cyclopenten-1-yl)amino)methyl)-7-deazaguanosine). The sequence is that of Queuine tRNA-ribosyltransferase from Desulfosudis oleivorans (strain DSM 6200 / JCM 39069 / Hxd3) (Desulfococcus oleovorans).